A 1175-amino-acid polypeptide reads, in one-letter code: 1-phosphatidylinositol 4,5-bisphosphate phosphodiesterase beta-4 (1175 aa).

Ala2 bears the N-acetylalanine mark. One can recognise a PI-PLC X-box domain in the interval 313-463 (QEMDHPLAHY…LKRKILIKNK (151 aa)). Catalysis depends on residues His328 and His375. Residues 482–511 (EAGESASPANILEDDNEEEIESADQEEEAH) form a disordered region. The segment covering 493-508 (LEDDNEEEIESADQEE) has biased composition (acidic residues). Positions 565 to 681 (LSTMINYAQP…GYLLKPDFMR (117 aa)) constitute a PI-PLC Y-box domain. The 126-residue stretch at 684-809 (DRTFDPFSET…SLRNEGNKPL (126 aa)) folds into the C2 domain. 2 disordered regions span residues 863–895 (ADVP…ELRP) and 1082–1110 (KISM…VREL). Polar residues-rich tracts occupy residues 881 to 895 (AKAN…ELRP) and 1085 to 1094 (MENSKAISQD). Thr886 carries the post-translational modification Phosphothreonine. A compositionally biased stretch (basic and acidic residues) spans 1095–1109 (KSIKNKAERERRVRE).

Requires Ca(2+) as cofactor. Preferentially expressed in the retina.

The protein localises to the cell membrane. It carries out the reaction a 1,2-diacyl-sn-glycero-3-phospho-(1D-myo-inositol-4,5-bisphosphate) + H2O = 1D-myo-inositol 1,4,5-trisphosphate + a 1,2-diacyl-sn-glycerol + H(+). The enzyme catalyses a 1,2-diacyl-sn-glycero-3-phospho-(1D-myo-inositol) + H2O = 1D-myo-inositol 1-phosphate + a 1,2-diacyl-sn-glycerol + H(+). Functionally, activated phosphatidylinositol-specific phospholipase C enzymes catalyze the production of the second messenger molecules diacylglycerol (DAG) and inositol 1,4,5-trisphosphate (IP3) involved in G-protein coupled receptor signaling pathways. PLCB4 is a direct effector of the endothelin receptor signaling pathway that plays an essential role in lower jaw and middle ear structures development. This is 1-phosphatidylinositol 4,5-bisphosphate phosphodiesterase beta-4 from Homo sapiens (Human).